The primary structure comprises 98 residues: Complement inhibitor RaCI1 (98 aa).

An N-terminal signal peptide occupies residues 1-20; the sequence is MNAMLVLFIASALFISEHNT. Disulfide bonds link cysteine 33–cysteine 57, cysteine 38–cysteine 59, and cysteine 53–cysteine 74. The disordered stretch occupies residues 79 to 98; it reads TTKPPMAPGDNKDNKEEESN. Over residues 88-98 the composition is skewed to basic and acidic residues; that stretch reads DNKDNKEEESN.

This sequence belongs to the RaCI family. In terms of tissue distribution, expressed in salivary glands.

The protein resides in the secreted. In terms of biological role, complement inhibitor. Prevents complement-mediated C5 activation by binding to C5. Binds C5 at a different binding site than the other tick complement inhibitors OmCI and CirpT1, and the drug eculizumab. Inhibits the complement in human and guinea pig but not in other species tested (rabbit, rat, mouse, and pig). The protein is Complement inhibitor RaCI1 of Rhipicephalus appendiculatus (Brown ear tick).